The primary structure comprises 1533 residues: Maternal protein pumilio (1533 aa).

4 disordered regions span residues A102–M149, A207–P276, Y304–G331, and W382–L452. Positions C103–K117 are enriched in basic and acidic residues. Gly residues predominate over residues P133–M149. Residues A207–G237 show a composition bias toward low complexity. A compositionally biased stretch (gly residues) spans M243–L255. Residues G256–P276 show a composition bias toward low complexity. 4 positions are modified to phosphoserine: S453, S468, S470, and S477. Residues S470–S479 show a composition bias toward polar residues. 4 disordered regions span residues S470–F558, V697–Q725, V846–P912, and L975–Q1008. Residues P483–A503 show a composition bias toward basic and acidic residues. Residue S505 is modified to Phosphoserine. Positions P863–Q875 are enriched in low complexity. Positions G1091–Y1428 constitute a PUM-HD domain. Pumilio repeat units follow at residues D1111–S1146, E1147–M1182, Q1183–H1218, E1219–N1254, A1255–D1290, E1291–N1326, S1327–D1362, and T1366–T1402. An adenine-nucleotide binding in RNA target region spans residues S1126 to Q1130. Residues N1162–Q1166 form a uracil-nucleotide binding in RNA target region. The tract at residues C1198 to Q1202 is adenine-nucleotide binding in RNA target. Residues N1234–Q1238 form a non-specific-nucleotide binding in RNA target region. The segment at C1270 to Q1274 is adenine-nucleotide binding in RNA target. The uracil-nucleotide binding in RNA target stretch occupies residues N1306–Q1310. Residues S1342 to E1346 form a guanine-nucleotide binding in RNA target region. The segment at N1382–Q1386 is uracil-nucleotide binding in RNA target. Positions A1494–L1533 are disordered. The segment covering V1496–S1519 has biased composition (low complexity).

Interacts with nanos (nos) and brat. Acts via the formation of a quaternary complex composed of pum, nanos, brat and the 3'-UTR mRNA of hb.

The protein resides in the cytoplasm. It is found in the cytoplasmic ribonucleoprotein granule. Sequence-specific RNA-binding protein that acts as a post-transcriptional repressor by binding the 3'-UTR of mRNA targets. Binds to an RNA consensus sequence, the Pumilio Response Element (PRE), 5'-UGUANAUA-3', that is related to the Nanos Response Element (NRE). Mediates post-transcriptional repression of transcripts via different mechanisms: acts via direct recruitment of deadenylase complexes leading to translational inhibition and mRNA degradation. Also mediates deadenylation-independent repression by promoting accessibility of miRNAs. Mediates post-transcriptional silencing of E2f mRNA by binding to its 3'-UTR and promoting miRNA regulation. Required for abdominal development and to support proliferation and self-renewal of germ cells. Pum is the only gene required for nanos (nos) activity that is not also required for posterior localization of germline determinants. Pum is required during embryogenesis when nanos activity apparently moves anteriorly from the posterior pole. The polypeptide is Maternal protein pumilio (pum) (Drosophila melanogaster (Fruit fly)).